A 318-amino-acid polypeptide reads, in one-letter code: Acetaldehyde dehydrogenase 1 (318 aa).

15-18 (SGNI) lines the NAD(+) pocket. Cys-133 functions as the Acyl-thioester intermediate in the catalytic mechanism. NAD(+)-binding positions include 164-172 (SAGPGTRAN) and Asn-289.

This sequence belongs to the acetaldehyde dehydrogenase family.

It catalyses the reaction acetaldehyde + NAD(+) + CoA = acetyl-CoA + NADH + H(+). In Azotobacter vinelandii (strain DJ / ATCC BAA-1303), this protein is Acetaldehyde dehydrogenase 1 (xylQ).